Consider the following 254-residue polypeptide: UPF0246 protein CPR_2119 (254 aa).

The protein belongs to the UPF0246 family.

The sequence is that of UPF0246 protein CPR_2119 from Clostridium perfringens (strain SM101 / Type A).